We begin with the raw amino-acid sequence, 376 residues long: Carbamoyl phosphate synthase small chain (376 aa).

A nucleophile region spans residues 1-181; the sequence is MSKAVLVLED…VEPDGPPGVS (181 aa). The segment at 1–183 is CPSase; that stretch reads MSKAVLVLED…PDGPPGVSRF (183 aa). The L-glutamine site is built by Ser-46, Gly-232, Gly-234, Phe-261, Gln-264, Asn-302, Gly-304, and Phe-305. In terms of domain architecture, Glutamine amidotransferase type-1 spans 184 to 376; it reads TVAALDLGIK…FVELMAGEGR (193 aa). Catalysis depends on residues His-350 and Glu-352.

This sequence belongs to the CarA family. As to quaternary structure, composed of two chains; the small (or glutamine) chain promotes the hydrolysis of glutamine to ammonia, which is used by the large (or ammonia) chain to synthesize carbamoyl phosphate. Tetramer of heterodimers (alpha,beta)4.

The catalysed reaction is hydrogencarbonate + L-glutamine + 2 ATP + H2O = carbamoyl phosphate + L-glutamate + 2 ADP + phosphate + 2 H(+). It catalyses the reaction L-glutamine + H2O = L-glutamate + NH4(+). It functions in the pathway amino-acid biosynthesis; L-arginine biosynthesis; carbamoyl phosphate from bicarbonate: step 1/1. The protein operates within pyrimidine metabolism; UMP biosynthesis via de novo pathway; (S)-dihydroorotate from bicarbonate: step 1/3. Its function is as follows. Small subunit of the glutamine-dependent carbamoyl phosphate synthetase (CPSase). CPSase catalyzes the formation of carbamoyl phosphate from the ammonia moiety of glutamine, carbonate, and phosphate donated by ATP, constituting the first step of 2 biosynthetic pathways, one leading to arginine and/or urea and the other to pyrimidine nucleotides. The small subunit (glutamine amidotransferase) binds and cleaves glutamine to supply the large subunit with the substrate ammonia. This chain is Carbamoyl phosphate synthase small chain, found in Mycobacterium tuberculosis (strain CDC 1551 / Oshkosh).